We begin with the raw amino-acid sequence, 212 residues long: uncharacterized protein (212 aa).

The segment at 47-129 (RELLDRRRSQ…GNIDNGQPRR (83 aa)) is disordered.

This is an uncharacterized protein from Caenorhabditis elegans.